Reading from the N-terminus, the 369-residue chain is Putative 2-aminoethylphosphonate import ATP-binding protein PhnT (369 aa).

Positions 19 to 250 (IVLDSLRVAY…PPNRFAAEFL (232 aa)) constitute an ABC transporter domain. 51 to 58 (GPSGSGKT) contacts ATP.

It belongs to the ABC transporter superfamily. 2-aminoethylphosphonate importer (TC 3.A.1.11.5) family.

It is found in the cell inner membrane. Probably part of the PhnSTUV complex (TC 3.A.1.11.5) involved in 2-aminoethylphosphonate import. Probably responsible for energy coupling to the transport system. This Salmonella typhi protein is Putative 2-aminoethylphosphonate import ATP-binding protein PhnT (phnT).